Reading from the N-terminus, the 159-residue chain is Nucleotide-binding protein Avin_13410 (159 aa).

The protein belongs to the YajQ family.

Nucleotide-binding protein. The protein is Nucleotide-binding protein Avin_13410 of Azotobacter vinelandii (strain DJ / ATCC BAA-1303).